The sequence spans 1013 residues: Probable outer membrane protein PmpG (1013 aa).

Residues 1 to 27 form the signal peptide; sequence MQTSFHKFFLSMILAYSCCSLSGGGYA. The Autotransporter domain occupies 733–1013; that stretch reads GRSYCRGLWV…GLSAGSKVRF (281 aa).

It belongs to the PMP outer membrane protein family.

It localises to the secreted. The protein localises to the cell wall. It is found in the cell outer membrane. The polypeptide is Probable outer membrane protein PmpG (pmpG) (Chlamydia trachomatis serovar D (strain ATCC VR-885 / DSM 19411 / UW-3/Cx)).